We begin with the raw amino-acid sequence, 110 residues long: uncharacterized protein (110 aa).

An N-terminal signal peptide occupies residues Met1–Ser26. Positions Arg87 to Asn110 are disordered.

To E.coli YceK.

This is an uncharacterized protein from Escherichia coli (strain K12).